A 1128-amino-acid polypeptide reads, in one-letter code: Cordon-bleu protein-like 1 (1128 aa).

Positions 1–35 are disordered; sequence MDGRTPRPQDAPARRKPKAKAPLPPAETKYTDVSS. Position 139 is a phosphothreonine (Thr139). A phosphoserine mark is found at Ser204, Ser222, and Ser256. 3 disordered regions span residues 249 to 309, 325 to 441, and 454 to 499; these read KKRD…VPQD, MSVD…SPKS, and TLKN…TSNG. Thr260 is subject to Phosphothreonine. A compositionally biased stretch (polar residues) spans 270-286; it reads FTRSNTISKPYISNTLP. Ser273 bears the Phosphoserine mark. Thr284 carries the phosphothreonine modification. Residues 291–296 carry the KKRRAP 1 motif; that stretch reads KKRRAP. Ser326, Ser333, Ser344, and Ser356 each carry phosphoserine. The segment covering 345 to 357 has biased composition (polar residues); it reads LQLSSMSAGNSSL. The KKRRAP 2 motif lies at 360–365; the sequence is TKRKAP. Positions 397–415 are enriched in polar residues; sequence SEANSPEELSSPAGISSDY. Over residues 416–425 the composition is skewed to acidic residues; that stretch reads SLEEIDEKEE. Ser438, Ser441, Ser461, Ser471, and Ser474 each carry phosphoserine. Residues 475–488 show a composition bias toward basic and acidic residues; that stretch reads MEEKQETKSTDGQE. Phosphoserine is present on residues Ser563, Ser584, Ser786, Ser813, Ser814, and Ser821. 4 disordered regions span residues 780–840, 882–964, 995–1081, and 1103–1128; these read TEDS…PFAP, SAAA…SQVS, RSQS…PEQM, and IPSN…QDGH. A compositionally biased stretch (basic and acidic residues) spans 899 to 908; sequence LTNKEAERDM. Residues Ser911, Ser917, Ser947, Ser1069, and Ser1070 each carry the phosphoserine modification. Polar residues-rich tracts occupy residues 1045–1081 and 1103–1122; these read SAHN…PEQM and IPSN…SMSP. Residues 1081-1101 form the WH2 domain; that stretch reads MRQSLLTAIRSGEAAAKLKRV. Ser1121 is modified (phosphoserine).

The chain is Cordon-bleu protein-like 1 from Homo sapiens (Human).